Reading from the N-terminus, the 759-residue chain is uncharacterized protein (759 aa).

Disordered regions lie at residues 269–328 (SQRV…GEEP) and 406–759 (LPLR…AQTA). Residues 289–299 (AGGKEEAERGG) are compositionally biased toward basic and acidic residues. Low complexity predominate over residues 406 to 415 (LPLRPPSGSG). Residues 417–430 (AARKPGYEKEEGRG) are compositionally biased toward basic and acidic residues. A compositionally biased stretch (low complexity) spans 431–444 (RATTASATAATSPR). Composition is skewed to basic and acidic residues over residues 469–518 (PESE…RGEH) and 525–545 (DSGR…EKGT). A compositionally biased stretch (pro residues) spans 585–599 (WVPPPHLLFPSPLPS). Low complexity predominate over residues 659–680 (SLSSLSSSSSSSSSSSPSYSPS). The segment covering 681-690 (PLSPPSPVSP) has biased composition (pro residues). Composition is skewed to low complexity over residues 691 to 704 (SSPR…IRSP) and 728 to 746 (PPFS…PSAP).

This is an uncharacterized protein from Human herpesvirus 6B (strain Z29) (HHV-6 variant B).